Consider the following 274-residue polypeptide: MSISYNVFDIAVNPTYYSFEKLKLIVEKAKELKILPLFIGLDMETNIQVIHLSKMQQTLCYCGIHPTHINTLYKENNIWNILDIVQADLKQLFVENSEYIIAIGECGLDYYRNQLKIEQQRIFKMQLELSYLNIPYFLHMRNAFDDFYNIIKNYTNVTGVIHSFDGTVDQALALINLGFYIGINGCSLKNNIDLVKNIPIDKILVETDSPFCLIRKSYAGAEYGKVLKVKENEPVYILNLIEIISNIKQMPIQQLIHQFKLNTIKCFPQLKKFQ.

Residues Glu105, His139, His162, and Asp208 each coordinate a divalent metal cation.

The protein belongs to the metallo-dependent hydrolases superfamily. TatD-type hydrolase family. Requires a divalent metal cation as cofactor.

It is found in the nucleus. Its function is as follows. Putative deoxyribonuclease. This chain is Putative deoxyribonuclease TATDN1 homolog, found in Enterocytozoon bieneusi (strain H348) (Microsporidian parasite).